The sequence spans 178 residues: Adenine phosphoribosyltransferase (178 aa).

The protein belongs to the purine/pyrimidine phosphoribosyltransferase family. In terms of assembly, homodimer.

The protein resides in the cytoplasm. It catalyses the reaction AMP + diphosphate = 5-phospho-alpha-D-ribose 1-diphosphate + adenine. The protein operates within purine metabolism; AMP biosynthesis via salvage pathway; AMP from adenine: step 1/1. Functionally, catalyzes a salvage reaction resulting in the formation of AMP, that is energically less costly than de novo synthesis. The chain is Adenine phosphoribosyltransferase from Novosphingobium aromaticivorans (strain ATCC 700278 / DSM 12444 / CCUG 56034 / CIP 105152 / NBRC 16084 / F199).